A 290-amino-acid polypeptide reads, in one-letter code: RxLR effector protein Avr4 (290 aa).

Positions 1–24 (MRSLHILLVITASLLASLAVSAEA) are cleaved as a signal peptide. The segment at 33-56 (VVENNKDKSRFLRDGGTTEAQTDE) is disordered. Residues 36 to 45 (NNKDKSRFLR) show a composition bias toward basic and acidic residues. The RxLR-dEER motif lies at 42–58 (RFLRDGGTTEAQTDEER). The interval 118-141 (KYERMQWQKLNEGQTLTYMRVGDR) is W1 motif. The W2 motif stretch occupies residues 151–174 (QLLRWVAQKKTVKSVYDDLQIEGF). The segment at 224–247 (VFEKWAMEGTHIKSVIKTLNLNNK) is W3 motif. N-linked (GlcNAc...) asparagine glycosylation occurs at Asn246. The segment at 249–270 (ASEMANNENFPALLKYVKLYLD) is y motif.

Belongs to the RxLR effector family.

It localises to the secreted. The protein localises to the host cytoplasm. Its subcellular location is the host nucleus. The protein resides in the host nucleolus. It is found in the host cytoskeleton. Functionally, secreted effector that acts as an elicitor of hypersensitive response (HR) specifically on plants carrying defense protein R4, through its interaction with this protein. This Phytophthora mirabilis protein is RxLR effector protein Avr4.